The sequence spans 2103 residues: Orsellinic acid synthase (2103 aa).

The N-terminal acylcarrier protein transacylase domain (SAT) stretch occupies residues 17–232; sequence DAVHDLNVRS…KRPELAHATI (216 aa). One can recognise a Ketosynthase family 3 (KS3) domain in the interval 348–782; sequence ADAIAVVGMS…GGNVSMLLQD (435 aa). Catalysis depends on for beta-ketoacyl synthase activity residues C525, H660, and H702. Residues 881-1197 are malonyl-CoA:ACP transacylase (MAT) domain; the sequence is VFTFTGQGAQ…RRGGDDWQSV (317 aa). S973 serves as the catalytic For acyl/malonyl transferase activity. The interval 1272-1409 is N-terminal hotdog fold; sequence HAVEKLQREE…GQPDSAVRRD (138 aa). The region spanning 1272–1582 is the PKS/mFAS DH domain; it reads HAVEKLQREE…FKKLERDFFA (311 aa). Residues 1303–1579 are product template (PT) domain; that stretch reads GHVVDESAIC…DICFKKLERD (277 aa). Residue H1304 is the Proton acceptor; for dehydratase activity of the active site. A C-terminal hotdog fold region spans residues 1433–1582; that stretch reads VHAMDTALFY…FKKLERDFFA (150 aa). The active-site Proton donor; for dehydratase activity is D1493. The tract at residues 1592 to 1638 is disordered; the sequence is STKPVAAAPAKSMAKRARQLAPSPSPSSSSGSNTPMSRSPTPSSVSD. Composition is skewed to low complexity over residues 1594–1603 and 1617–1631; these read KPVAAAPAKS and PSSSSGSNTPMSRSP. Carrier domains follow at residues 1640-1716 and 1741-1815; these read VDLG…GGSA and PAPS…DDDA. S1676 bears the O-(pantetheine 4'-phosphoryl)serine mark. A disordered region spans residues 1722 to 1743; sequence EDITKPTPSPEQTQARKQGPAP. O-(pantetheine 4'-phosphoryl)serine is present on S1775. The disordered stretch occupies residues 1809–1838; that stretch reads EALDDDAEEESAPAQTSTNPAKETTIDSSR. The segment covering 1810 to 1819 has biased composition (acidic residues); that stretch reads ALDDDAEEES. The segment covering 1823-1836 has biased composition (polar residues); it reads QTSTNPAKETTIDS. A thioesterase (TE) domain region spans residues 1849-2082; it reads ASYIHLKALP…TVNGDHFSMM (234 aa).

The enzyme catalyses 3 malonyl-CoA + acetyl-CoA + 2 H(+) = orsellinate + 3 CO2 + 4 CoA. It participates in secondary metabolite biosynthesis. Non-reducing polyketide synthase; part of the gene cluster that mediates the biosynthesis of orsellinic acid, as well as of the cathepsin K inhibitors F9775 A and F9775 B. The non-reducing polyketide synthase orsA produces orsellinic acid by condensing acetyl-CoA with 3 malonyl-CoA units. Further modifications by the decarboxylase orsB and the tyrosinase-like protein orsC lead to the production of F9775 A and F9775 B. The functions of orsD and orsE remain unclear since only orsB and orsC are required to convert orsellinic acid into F9775 A and F9775 B. In Emericella nidulans (strain FGSC A4 / ATCC 38163 / CBS 112.46 / NRRL 194 / M139) (Aspergillus nidulans), this protein is Orsellinic acid synthase.